Here is a 434-residue protein sequence, read N- to C-terminus: MQTSYKNKKVTVIGLGKTGLSCVDFLLAKQADVRVIDTRTQPAGAEQLAKNVPLHTGSLNQQWLLESDLIIISPGLAVKTPEIQTALAAGIEVIGDIELFCREAKKPIIAITGSNGKSTVTSLVAHMVNAAGLKVGMGGNIGIPALSLLEQAHDMYVLELSSFQLETTYSLKATSATVLNISEDHMNRYVDLEDYRQAKLKIYHHAQTAVINAEDALTAMDGLKNGVSFGEDNADYWLKTEKGRSYLMAKDERVLACDEMKLVGRHNYMNALAAIALAQAAGIPLESIRRALREFNGLDHRFQLAHFAHGVRWVNDSKATNVGSTVAALTGLQLNGTLHLLLGGDGKGADFSELASLINQPNIICYCFGQDGEQLAALSPRSQRFSTMEEAINALRPTLSAGDMVLLSPACASLDQFSSFEQRGDEFTRLAKLS.

113–119 contacts ATP; it reads GSNGKST.

The protein belongs to the MurCDEF family.

It is found in the cytoplasm. The catalysed reaction is UDP-N-acetyl-alpha-D-muramoyl-L-alanine + D-glutamate + ATP = UDP-N-acetyl-alpha-D-muramoyl-L-alanyl-D-glutamate + ADP + phosphate + H(+). Its pathway is cell wall biogenesis; peptidoglycan biosynthesis. In terms of biological role, cell wall formation. Catalyzes the addition of glutamate to the nucleotide precursor UDP-N-acetylmuramoyl-L-alanine (UMA). The chain is UDP-N-acetylmuramoylalanine--D-glutamate ligase from Pasteurella multocida (strain Pm70).